We begin with the raw amino-acid sequence, 524 residues long: Bifunctional purine biosynthesis protein PurH (524 aa).

Residues 1–149 form the MGS-like domain; sequence MSDPLIKRAL…KNNESVTVLT (149 aa).

This sequence belongs to the PurH family.

The catalysed reaction is (6R)-10-formyltetrahydrofolate + 5-amino-1-(5-phospho-beta-D-ribosyl)imidazole-4-carboxamide = 5-formamido-1-(5-phospho-D-ribosyl)imidazole-4-carboxamide + (6S)-5,6,7,8-tetrahydrofolate. It carries out the reaction IMP + H2O = 5-formamido-1-(5-phospho-D-ribosyl)imidazole-4-carboxamide. It functions in the pathway purine metabolism; IMP biosynthesis via de novo pathway; 5-formamido-1-(5-phospho-D-ribosyl)imidazole-4-carboxamide from 5-amino-1-(5-phospho-D-ribosyl)imidazole-4-carboxamide (10-formyl THF route): step 1/1. It participates in purine metabolism; IMP biosynthesis via de novo pathway; IMP from 5-formamido-1-(5-phospho-D-ribosyl)imidazole-4-carboxamide: step 1/1. The chain is Bifunctional purine biosynthesis protein PurH from Chlorobium luteolum (strain DSM 273 / BCRC 81028 / 2530) (Pelodictyon luteolum).